A 181-amino-acid polypeptide reads, in one-letter code: Probable cobalt-precorrin-6B C(15)-methyltransferase (decarboxylating) (181 aa).

S-adenosyl-L-methionine-binding positions include T16, 40 to 44 (GCGSG), D61, and A89.

Belongs to the methyltransferase superfamily. Archaeal-type CbiT family.

It catalyses the reaction Co-precorrin-6B + S-adenosyl-L-methionine = Co-precorrin-7 + S-adenosyl-L-homocysteine + CO2. Its pathway is cofactor biosynthesis; adenosylcobalamin biosynthesis; cob(II)yrinate a,c-diamide from sirohydrochlorin (anaerobic route): step 8/10. Its function is as follows. Catalyzes the methylation of C-15 in cobalt-precorrin-6B followed by the decarboxylation of C-12 to form cobalt-precorrin-7. The chain is Probable cobalt-precorrin-6B C(15)-methyltransferase (decarboxylating) from Methanococcus maripaludis (strain C5 / ATCC BAA-1333).